We begin with the raw amino-acid sequence, 518 residues long: NADH-quinone oxidoreductase subunit N (518 aa).

A run of 14 helical transmembrane segments spans residues 18-38, 45-65, 82-102, 113-133, 136-156, 171-191, 220-240, 254-274, 295-315, 328-348, 355-375, 399-419, 439-459, and 486-506; these read FRPE…DLVF, VALL…LLAI, AFAI…VIIA, IGQF…MASA, LLMV…LAGF, VIYG…LYGL, VALV…VAAV, PTPF…ALAI, LAGI…MTLG, LLAY…SAVS, VMIY…VVIL, AVAF…AGFV, WYAW…YYYV, and VMLG…TPMV.

The protein belongs to the complex I subunit 2 family. In terms of assembly, NDH-1 is composed of 14 different subunits. Subunits NuoA, H, J, K, L, M, N constitute the membrane sector of the complex.

The protein resides in the cell inner membrane. The enzyme catalyses a quinone + NADH + 5 H(+)(in) = a quinol + NAD(+) + 4 H(+)(out). NDH-1 shuttles electrons from NADH, via FMN and iron-sulfur (Fe-S) centers, to quinones in the respiratory chain. The immediate electron acceptor for the enzyme in this species is believed to be ubiquinone. Couples the redox reaction to proton translocation (for every two electrons transferred, four hydrogen ions are translocated across the cytoplasmic membrane), and thus conserves the redox energy in a proton gradient. The sequence is that of NADH-quinone oxidoreductase subunit N from Anaeromyxobacter sp. (strain Fw109-5).